Here is a 551-residue protein sequence, read N- to C-terminus: MDAVEPSVEKEYKKIISFRDTVFEGKHQQFLVPNNVRLKFLRDRLHKSLKNFDSVKRKVEIANDEGNNKLLKSSPKAQTRDENTPSEFKNGGFSNRESMSENCFSKSSTNLPRLDINRDFNSLLNSQTKPEATGLMKEDITPVVNTSKQSSTGTQEESSKPEKSNKLLAKSTLSLYGNQAFNPSSVLPSNSSSTPKENKKNVNKETYQPNTFRRSPLKNDTGSVELSNLYMPSPPSSALPVSLVSAPSPPRATNVAVPCLKHLESSEQGNNLLINKAFTSPRLPSPPQSTRPSSTRFPSVPLSDEKNSIVSVKNEEPSVILGNQSPISDLHPYSPSWIPYPKELQSLQVNRIPELSLENNVMSTRDYKDIMPHPRPSAVLLDKPVSLDQTSHPFPHQNTYILPPGIRNSVDYDGTFLSRKSLPPYNGIHRLHESPSQFSNQSRYNWEPILENRSLLHLNRPPPIETHYSYESNNSSFSPYYHKRHRQISPYYPTSSVYGVYESPPHMSDSRISRQHMPLTHTTYEPSAPYYNDYELAEEIERRRHHSFYDY.

4 disordered regions span residues 66–111, 130–165, 180–229, and 277–303; these read GNNK…STNL, PEATGLMKEDITPVVNTSKQSSTGTQEESSKPEKSN, AFNP…LSNL, and AFTSPRLPSPPQSTRPSSTRFPSVPLS. Phosphoserine is present on serine 74. Composition is skewed to polar residues over residues 92–111 and 143–156; these read GFSNRESMSENCFSKSSTNL and VVNTSKQSSTGTQE. Residues 182 to 193 are compositionally biased toward low complexity; it reads NPSSVLPSNSSS. Positions 204–226 are enriched in polar residues; the sequence is KETYQPNTFRRSPLKNDTGSVEL. Low complexity predominate over residues 290–299; it reads TRPSSTRFPS.

This is an uncharacterized protein from Schizosaccharomyces pombe (strain 972 / ATCC 24843) (Fission yeast).